The chain runs to 146 residues: Hemoglobin subunit delta (146 aa).

Positions 2-146 (HLTGEEKSAV…VATALAHKYH (145 aa)) constitute a Globin domain. Histidine 63 and histidine 92 together coordinate heme b.

It belongs to the globin family. In terms of assembly, heterotetramer of two delta chains and two alpha chains. As to expression, red blood cells.

The protein is Hemoglobin subunit delta (HBD) of Ateles fusciceps (Brown-headed spider monkey).